The primary structure comprises 360 residues: Probable neutral protease 2 homolog MCYG_04257 (360 aa).

The first 17 residues, 1 to 17 (MQLIAFLAALGVPVAFA), serve as a signal peptide directing secretion. A propeptide spanning residues 18–182 (ATIPSVPLNH…KVKAGSIDKR (165 aa)) is cleaved from the precursor. Cys-190 and Cys-261 are oxidised to a cystine. An N-linked (GlcNAc...) asparagine glycan is attached at Asn-262. 2 disulfides stabilise this stretch: Cys-268-Cys-286 and Cys-300-Cys-360. Residue His-311 coordinates Zn(2+). Residue Glu-312 is part of the active site. Positions 315 and 326 each coordinate Zn(2+).

It belongs to the peptidase M35 family. Requires Zn(2+) as cofactor.

The protein localises to the secreted. It carries out the reaction Preferential cleavage of bonds with hydrophobic residues in P1'. Also 3-Asn-|-Gln-4 and 8-Gly-|-Ser-9 bonds in insulin B chain.. Its function is as follows. Probable secreted metalloprotease that shows high activities on basic nuclear substrates such as histone and protamine. May be involved in virulence. This Arthroderma otae (strain ATCC MYA-4605 / CBS 113480) (Microsporum canis) protein is Probable neutral protease 2 homolog MCYG_04257.